Consider the following 146-residue polypeptide: Hemoglobin subunit beta (146 aa).

Positions 2 to 146 constitute a Globin domain; it reads QWTAEEKQLI…VAHALARKYH (145 aa). Heme b contacts are provided by H63 and H92.

It belongs to the globin family. Heterotetramer of two alpha chains and two beta chains. In terms of tissue distribution, red blood cells.

In terms of biological role, involved in oxygen transport from the lung to the various peripheral tissues. This chain is Hemoglobin subunit beta (HBB), found in Apus apus (Common swift).